The chain runs to 476 residues: MATPANQTGRITQVIGAVVDVQFEGHLPAILNAIETKNGDNRLVLEVAQHLGESTVRTIAMDTTEGLVRGQEVTDTGSPIMVPVGIGTLGRIMNVIGEPVDEQGPVANEGLRPIHAEAPLYTDQSTEAEILVTGIKVVDLLAPYAKGGKIGLFGGAGVGKTVLIQELINNVAKAHGGYSVFAGVGERTREGNDLYHEFIESGVNKKGGGEGSKCALVYGQMNEPPGARARVALSGLTVAEHFRDQGQDVLFFVDNIFRFTQAGSEVSALLGRIPSAVGYQPTLATDMGALQERITTTHKGSITSVQAIYVPADDLTDPAPATSFAHLDATTVLNRAISEKGIYPAVDPLDSTSRMLSPLIVGEEHYQTARMVQQVLQKYKSLQDIIAILGMDELSEEDKLAVARARKIERFLSQPFFVAEIFTGSPGKFVDLADTIKGFRAICEGKYDHLPEAAFYMVGAIEEAVEKGKKLAAEAA.

154–161 (GGAGVGKT) is an ATP binding site.

It belongs to the ATPase alpha/beta chains family. As to quaternary structure, F-type ATPases have 2 components, CF(1) - the catalytic core - and CF(0) - the membrane proton channel. CF(1) has five subunits: alpha(3), beta(3), gamma(1), delta(1), epsilon(1). CF(0) has four main subunits: a(1), b(1), b'(1) and c(9-12).

The protein localises to the cell inner membrane. It catalyses the reaction ATP + H2O + 4 H(+)(in) = ADP + phosphate + 5 H(+)(out). In terms of biological role, produces ATP from ADP in the presence of a proton gradient across the membrane. The catalytic sites are hosted primarily by the beta subunits. In Rhodopseudomonas palustris (strain BisB5), this protein is ATP synthase subunit beta.